We begin with the raw amino-acid sequence, 114 residues long: Iron-sulfur cluster insertion protein ErpA (114 aa).

Positions 42, 106, and 108 each coordinate iron-sulfur cluster.

It belongs to the HesB/IscA family. In terms of assembly, homodimer. The cofactor is iron-sulfur cluster.

Required for insertion of 4Fe-4S clusters for at least IspG. The chain is Iron-sulfur cluster insertion protein ErpA from Cronobacter sakazakii (strain ATCC BAA-894) (Enterobacter sakazakii).